Here is a 251-residue protein sequence, read N- to C-terminus: Regulator of G-protein signaling 9-binding protein C (251 aa).

At methionine 1–glutamine 230 the chain is on the cytoplasmic side. Coiled-coil stretches lie at residues leucine 53–arginine 94 and alanine 158–asparagine 187. The chain crosses the membrane as a helical; Anchor for type IV membrane protein span at residues leucine 231–isoleucine 250. A topological domain (extracellular) is located at residue leucine 251.

This sequence belongs to the RGS7BP/RGS9BP family.

The protein resides in the membrane. Its function is as follows. Regulator of G protein-coupled receptor (GPCR) signaling. Probably acts by regulating the activity of some 'R7' family protein (RGS6, RGS7, RGS9 and/or RGS11). The polypeptide is Regulator of G-protein signaling 9-binding protein C (rgs9bp-c) (Xenopus laevis (African clawed frog)).